We begin with the raw amino-acid sequence, 661 residues long: Immunoglobulin-like domain-containing receptor 2 (661 aa).

The first 35 residues, 1-35, serve as a signal peptide directing secretion; sequence MPAFPTLDLDGKLGKMDRVVLGWTAVFWLTAMVEG. Residues 36 to 177 enclose the Ig-like V-type domain; that stretch reads LQVTVPDKKK…LEGKNEDSVE (142 aa). Residues 36 to 201 are Lumenal-facing; the sequence is LQVTVPDKKK…PSFAVEIMPE (166 aa). The cysteines at positions 57 and 160 are disulfide-linked. A helical transmembrane segment spans residues 202 to 222; it reads WVFVGLVILGIFLFFVLVGIC. Residues 223–661 lie on the Cytoplasmic side of the membrane; that stretch reads WCQCCPHSCC…DFPTRMSLVV (439 aa). Disordered stretches follow at residues 288-310, 410-429, and 453-661; these read LMDK…HSVR, EDRE…MLSR, and QRSR…SLVV. Composition is skewed to basic and acidic residues over residues 410 to 428 and 463 to 478; these read EDRE…EMLS and HEAR…ESRA. Phosphoserine is present on S487. Over residues 491-506 the composition is skewed to basic and acidic residues; it reads YYGRGRSREPPGDGER. Omega-N-methylarginine is present on R559. S594 carries the phosphoserine modification. Residues 595 to 607 are compositionally biased toward acidic residues; it reads EGEDEDDAADEDA. A compositionally biased stretch (basic and acidic residues) spans 628–639; sequence RGRDLSFHSNSE.

This sequence belongs to the immunoglobulin superfamily. LISCH7 family. Interacts with MARVELD2 and OCLN. Interacts with P4HB and HSPA5; the interaction with HSPA5 stabilizes ILDR2 expression. Interacts (via C-terminus) with TRA2A, TRA2B and SRSF1. Expressed in epithelial tissues, mainly in liver, kidney and colon.

The protein localises to the endoplasmic reticulum membrane. It localises to the cell junction. It is found in the tight junction. Its subcellular location is the nucleus. In terms of biological role, may be involved in ER stress pathways with effects on lipid homeostasis and insulin secretion. With ILDR1 and LSR, involved in the maintain of the epithelial barrier function through the recruitment of MARVELD2/tricellulin to tricellular tight junctions. Also functions as a B7-like protein family member expressed on immune cells and inflamed tissue and with T-cell inhibitory activity. In the inner ear, may regulate alternative pre-mRNA splicing via binding to TRA2A, TRA2B and SRSF1. The chain is Immunoglobulin-like domain-containing receptor 2 from Mus musculus (Mouse).